Here is a 287-residue protein sequence, read N- to C-terminus: BURP domain-containing protein 2 (287 aa).

A signal peptide spans Met1–Ala21. The BURP domain occupies Phe67–Asn287.

In terms of tissue distribution, expressed in shoot.

The protein is BURP domain-containing protein 2 (BURP2) of Oryza sativa subsp. japonica (Rice).